Reading from the N-terminus, the 142-residue chain is Large ribosomal subunit protein bL17 (142 aa).

It belongs to the bacterial ribosomal protein bL17 family. As to quaternary structure, part of the 50S ribosomal subunit. Contacts protein L32.

The sequence is that of Large ribosomal subunit protein bL17 from Methylocella silvestris (strain DSM 15510 / CIP 108128 / LMG 27833 / NCIMB 13906 / BL2).